Reading from the N-terminus, the 73-residue chain is MSKPVNPSQRTPLCARCRKQAVAAEYRPFCSKRCADADLGQWLKGGYVIPGAAAEQADDTAGPGAAEDDTDSH.

Residues Cys14, Cys17, Cys30, and Cys34 each coordinate Zn(2+). Residues Ala54–His73 are disordered.

The protein belongs to the DNA gyrase inhibitor YacG family. In terms of assembly, interacts with GyrB. Zn(2+) is required as a cofactor.

In terms of biological role, inhibits all the catalytic activities of DNA gyrase by preventing its interaction with DNA. Acts by binding directly to the C-terminal domain of GyrB, which probably disrupts DNA binding by the gyrase. The polypeptide is DNA gyrase inhibitor YacG (Hyphomonas neptunium (strain ATCC 15444)).